The sequence spans 436 residues: Methylenetetrahydrofolate--tRNA-(uracil-5-)-methyltransferase TrmFO (436 aa).

10–15 serves as a coordination point for FAD; that stretch reads GAGLAG.

Belongs to the MnmG family. TrmFO subfamily. FAD is required as a cofactor.

Its subcellular location is the cytoplasm. It catalyses the reaction uridine(54) in tRNA + (6R)-5,10-methylene-5,6,7,8-tetrahydrofolate + NADH + H(+) = 5-methyluridine(54) in tRNA + (6S)-5,6,7,8-tetrahydrofolate + NAD(+). It carries out the reaction uridine(54) in tRNA + (6R)-5,10-methylene-5,6,7,8-tetrahydrofolate + NADPH + H(+) = 5-methyluridine(54) in tRNA + (6S)-5,6,7,8-tetrahydrofolate + NADP(+). Functionally, catalyzes the folate-dependent formation of 5-methyl-uridine at position 54 (M-5-U54) in all tRNAs. The chain is Methylenetetrahydrofolate--tRNA-(uracil-5-)-methyltransferase TrmFO from Staphylococcus carnosus (strain TM300).